A 312-amino-acid polypeptide reads, in one-letter code: Beta-ketoacyl-[acyl-carrier-protein] synthase III (312 aa).

Catalysis depends on residues Cys-112 and His-237. The interval 238–242 (QANIR) is ACP-binding. Asn-267 is an active-site residue.

This sequence belongs to the thiolase-like superfamily. FabH family. Homodimer.

Its subcellular location is the cytoplasm. It catalyses the reaction malonyl-[ACP] + acetyl-CoA + H(+) = 3-oxobutanoyl-[ACP] + CO2 + CoA. It functions in the pathway lipid metabolism; fatty acid biosynthesis. Its function is as follows. Catalyzes the condensation reaction of fatty acid synthesis by the addition to an acyl acceptor of two carbons from malonyl-ACP. Catalyzes the first condensation reaction which initiates fatty acid synthesis and may therefore play a role in governing the total rate of fatty acid production. Possesses both acetoacetyl-ACP synthase and acetyl transacylase activities. Its substrate specificity determines the biosynthesis of branched-chain and/or straight-chain of fatty acids. This is Beta-ketoacyl-[acyl-carrier-protein] synthase III from Oceanobacillus iheyensis (strain DSM 14371 / CIP 107618 / JCM 11309 / KCTC 3954 / HTE831).